The chain runs to 211 residues: tRNA (guanine-N(7)-)-methyltransferase (211 aa).

The S-adenosyl-L-methionine site is built by E44, D69, D96, and D118. Residue D118 is part of the active site. A substrate-binding site is contributed by K122. Residues 124 to 129 form an interaction with RNA region; the sequence is KHEKRR. Residues D154 and 191–194 contribute to the substrate site; that span reads TEYE.

It belongs to the class I-like SAM-binding methyltransferase superfamily. TrmB family.

It carries out the reaction guanosine(46) in tRNA + S-adenosyl-L-methionine = N(7)-methylguanosine(46) in tRNA + S-adenosyl-L-homocysteine. The protein operates within tRNA modification; N(7)-methylguanine-tRNA biosynthesis. Its function is as follows. Catalyzes the formation of N(7)-methylguanine at position 46 (m7G46) in tRNA. The sequence is that of tRNA (guanine-N(7)-)-methyltransferase from Streptococcus pyogenes serotype M6 (strain ATCC BAA-946 / MGAS10394).